The following is a 512-amino-acid chain: GMP synthase [glutamine-hydrolyzing] (512 aa).

In terms of domain architecture, Glutamine amidotransferase type-1 spans 7-197 (LVLVVDFGGQ…LFKVAGLKAD (191 aa)). The Nucleophile role is filled by Cys-84. Active-site residues include His-171 and Glu-173. The GMPS ATP-PPase domain maps to 198-387 (WSMASFAEEK…LGIPHKLVWR (190 aa)). 225–231 (SGGVDSS) is a binding site for ATP.

As to quaternary structure, homodimer.

The catalysed reaction is XMP + L-glutamine + ATP + H2O = GMP + L-glutamate + AMP + diphosphate + 2 H(+). Its pathway is purine metabolism; GMP biosynthesis; GMP from XMP (L-Gln route): step 1/1. Its function is as follows. Catalyzes the synthesis of GMP from XMP. This chain is GMP synthase [glutamine-hydrolyzing], found in Clostridium novyi (strain NT).